Here is a 197-residue protein sequence, read N- to C-terminus: Imidazoleglycerol-phosphate dehydratase (197 aa).

The protein belongs to the imidazoleglycerol-phosphate dehydratase family.

The protein resides in the cytoplasm. The catalysed reaction is D-erythro-1-(imidazol-4-yl)glycerol 3-phosphate = 3-(imidazol-4-yl)-2-oxopropyl phosphate + H2O. It functions in the pathway amino-acid biosynthesis; L-histidine biosynthesis; L-histidine from 5-phospho-alpha-D-ribose 1-diphosphate: step 6/9. This chain is Imidazoleglycerol-phosphate dehydratase, found in Methylococcus capsulatus (strain ATCC 33009 / NCIMB 11132 / Bath).